The following is a 557-amino-acid chain: Chaperonin GroEL 1 (557 aa).

ATP-binding positions include 29-32, Lys-50, 86-90, Gly-416, and Asp-495; these read TLGP and DGTTT.

This sequence belongs to the chaperonin (HSP60) family. As to quaternary structure, forms a cylinder of 14 subunits composed of two heptameric rings stacked back-to-back. Interacts with the co-chaperonin GroES.

It is found in the cytoplasm. It catalyses the reaction ATP + H2O + a folded polypeptide = ADP + phosphate + an unfolded polypeptide.. Together with its co-chaperonin GroES, plays an essential role in assisting protein folding. The GroEL-GroES system forms a nano-cage that allows encapsulation of the non-native substrate proteins and provides a physical environment optimized to promote and accelerate protein folding. This Protochlamydia amoebophila (strain UWE25) protein is Chaperonin GroEL 1.